A 439-amino-acid polypeptide reads, in one-letter code: Serine/threonine-protein kinase 2 (439 aa).

Residues 87–439 (NDDFYHISTG…IFSDWINGGN (353 aa)) form the Protein kinase domain. Residues 93 to 101 (ISTGGYGIV) and Lys117 contribute to the ATP site. The active-site Proton acceptor is Asp307.

The protein belongs to the protein kinase superfamily. Ser/Thr protein kinase family. In terms of processing, phosphorylated in vivo. Autophosphorylated in vitro.

It is found in the host endoplasmic reticulum. Its subcellular location is the host endoplasmic reticulum-Golgi intermediate compartment. It carries out the reaction L-seryl-[protein] + ATP = O-phospho-L-seryl-[protein] + ADP + H(+). It catalyses the reaction L-threonyl-[protein] + ATP = O-phospho-L-threonyl-[protein] + ADP + H(+). In terms of biological role, essential serine-protein kinase involved in the early stage of virion morphogenesis. The protein is Serine/threonine-protein kinase 2 (OPG054) of Vaccinia virus (strain Tian Tan) (VACV).